A 295-amino-acid chain; its full sequence is Ethanolamine ammonia-lyase small subunit (295 aa).

Positions 207, 228, and 258 each coordinate adenosylcob(III)alamin.

This sequence belongs to the EutC family. In terms of assembly, the basic unit is a heterodimer which dimerizes to form tetramers. The heterotetramers trimerize; 6 large subunits form a core ring with 6 small subunits projecting outwards. Adenosylcob(III)alamin is required as a cofactor.

The protein localises to the bacterial microcompartment. The catalysed reaction is ethanolamine = acetaldehyde + NH4(+). The protein operates within amine and polyamine degradation; ethanolamine degradation. Catalyzes the deamination of various vicinal amino-alcohols to oxo compounds. Allows this organism to utilize ethanolamine as the sole source of nitrogen and carbon in the presence of external vitamin B12. The sequence is that of Ethanolamine ammonia-lyase small subunit from Escherichia fergusonii (strain ATCC 35469 / DSM 13698 / CCUG 18766 / IAM 14443 / JCM 21226 / LMG 7866 / NBRC 102419 / NCTC 12128 / CDC 0568-73).